A 335-amino-acid chain; its full sequence is Leucine-rich repeat-containing protein 39 (335 aa).

The stretch at 10–47 (AVNAVKEVWEKRIKKLNEDLKREKEFQHKLVRIWEERV) forms a coiled coil. LRR repeat units lie at residues 84–105 (QLQE…IGRF), 107–128 (NLIV…IGLL), 130–151 (RLQE…LSNC), 153–176 (SLEK…SNLL), 177–197 (KLTH…AVLN), 200–221 (ALEW…IERM), 223–244 (NLHT…ISNM), 246–267 (NLGT…MEEM), and 269–290 (NLRF…PPSE).

As to quaternary structure, interacts with MYH7 (via C-terminus). In terms of tissue distribution, highly expressed in skeletal muscle and heart. Not detected in other tissues tested.

Its subcellular location is the cytoplasm. It localises to the myofibril. The protein resides in the sarcomere. The protein localises to the m line. Component of the sarcomeric M-band which plays a role in myocyte response to biomechanical stress. May regulate expression of other M-band proteins via an SRF-dependent pathway. Important for normal contractile function in heart. The polypeptide is Leucine-rich repeat-containing protein 39 (LRRC39) (Homo sapiens (Human)).